The chain runs to 184 residues: Peptide deformylase 2 (184 aa).

The Fe cation site is built by Cys110 and His153. The active site involves Glu154. His157 is a Fe cation binding site.

This sequence belongs to the polypeptide deformylase family. The cofactor is Fe(2+).

The catalysed reaction is N-terminal N-formyl-L-methionyl-[peptide] + H2O = N-terminal L-methionyl-[peptide] + formate. Functionally, removes the formyl group from the N-terminal Met of newly synthesized proteins. Requires at least a dipeptide for an efficient rate of reaction. N-terminal L-methionine is a prerequisite for activity but the enzyme has broad specificity at other positions. This chain is Peptide deformylase 2, found in Bacillus cereus (strain ATCC 14579 / DSM 31 / CCUG 7414 / JCM 2152 / NBRC 15305 / NCIMB 9373 / NCTC 2599 / NRRL B-3711).